Here is a 288-residue protein sequence, read N- to C-terminus: Probable ketoamine kinase VP1481 (288 aa).

92-94 (NYL) provides a ligand contact to ATP. Asp195 functions as the Proton acceptor in the catalytic mechanism.

This sequence belongs to the fructosamine kinase family.

Its function is as follows. Ketoamine kinase that phosphorylates ketoamines on the third carbon of the sugar moiety to generate ketoamine 3-phosphate. The sequence is that of Probable ketoamine kinase VP1481 from Vibrio parahaemolyticus serotype O3:K6 (strain RIMD 2210633).